A 241-amino-acid chain; its full sequence is UPF0173 metal-dependent hydrolase Haur_4333 (241 aa).

The protein belongs to the UPF0173 family.

This is UPF0173 metal-dependent hydrolase Haur_4333 from Herpetosiphon aurantiacus (strain ATCC 23779 / DSM 785 / 114-95).